Reading from the N-terminus, the 450-residue chain is Probable rhamnogalacturonase E (450 aa).

A signal peptide spans 1–22; it reads MTWSTSFLSVHFFAFITTSIHA. Cysteine 43 and cysteine 69 form a disulfide bridge. N-linked (GlcNAc...) asparagine glycans are attached at residues asparagine 54, asparagine 92, and asparagine 131. Aspartate 222 functions as the Proton donor in the catalytic mechanism. Cysteine 224 and cysteine 241 are disulfide-bonded. 2 N-linked (GlcNAc...) asparagine glycosylation sites follow: asparagine 242 and asparagine 257. Residue histidine 297 is part of the active site. 2 N-linked (GlcNAc...) asparagine glycosylation sites follow: asparagine 324 and asparagine 329. Intrachain disulfides connect cysteine 347/cysteine 353 and cysteine 375/cysteine 384.

The protein belongs to the glycosyl hydrolase 28 family.

It localises to the secreted. Pectinolytic enzymes consist of four classes of enzymes: pectine lyase, polygalacturonase, pectin methylesterase and rhamnogalacturonase. Hydrolyzes alpha-D-galacturonopyranosyl-(1,2)-alpha-L-rhamnopyranosyl linkages in the backbone of the hairy regions of pectins. The sequence is that of Probable rhamnogalacturonase E (rhgE) from Aspergillus niger.